The chain runs to 575 residues: E3 ubiquitin-protein ligase kcmf-1 (575 aa).

The ZZ-type zinc finger occupies 9–73; the sequence is HEGVSCDGCA…PMQLILSSVD (65 aa). 8 residues coordinate Zn(2+): cysteine 14, cysteine 17, cysteine 29, cysteine 32, cysteine 38, cysteine 41, histidine 59, and histidine 63. Disordered regions lie at residues 277–306 and 530–575; these read PIYP…DDND and EADE…INID. 2 stretches are compositionally biased toward acidic residues: residues 297–306 and 530–563; these read SADESEDDND and EADE…ENDS.

The protein belongs to the KCMF1 family.

It is found in the cytoplasm. It localises to the late endosome. Its subcellular location is the lysosome. The enzyme catalyses S-ubiquitinyl-[E2 ubiquitin-conjugating enzyme]-L-cysteine + [acceptor protein]-L-lysine = [E2 ubiquitin-conjugating enzyme]-L-cysteine + N(6)-ubiquitinyl-[acceptor protein]-L-lysine.. Its pathway is protein modification; protein ubiquitination. Its function is as follows. E3 ubiquitin-protein ligase which accepts ubiquitin from an E2 ubiquitin-conjugating enzyme and then transfers it to targeted substrates, promoting their degradation by the proteasome. The protein is E3 ubiquitin-protein ligase kcmf-1 of Caenorhabditis elegans.